The sequence spans 86 residues: Large ribosomal subunit protein bL27 (86 aa).

The protein belongs to the bacterial ribosomal protein bL27 family.

The protein is Large ribosomal subunit protein bL27 of Flavobacterium psychrophilum (strain ATCC 49511 / DSM 21280 / CIP 103535 / JIP02/86).